The primary structure comprises 363 residues: NAD(P)H-quinone oxidoreductase subunit 1, chloroplastic (363 aa).

A run of 7 helical transmembrane segments spans residues 30 to 50 (FIPI…IVWL), 104 to 124 (IAVI…HLVL), 129 to 149 (IGVF…LMSG), 248 to 268 (YSGI…LVSS), 269 to 289 (LFVT…IFVF), 300 to 320 (VFEP…FLFI), and 336 to 356 (LLNL…LLTT).

The protein belongs to the complex I subunit 1 family. In terms of assembly, NDH is composed of at least 16 different subunits, 5 of which are encoded in the nucleus.

It localises to the plastid. Its subcellular location is the chloroplast thylakoid membrane. The enzyme catalyses a plastoquinone + NADH + (n+1) H(+)(in) = a plastoquinol + NAD(+) + n H(+)(out). It carries out the reaction a plastoquinone + NADPH + (n+1) H(+)(in) = a plastoquinol + NADP(+) + n H(+)(out). In terms of biological role, NDH shuttles electrons from NAD(P)H:plastoquinone, via FMN and iron-sulfur (Fe-S) centers, to quinones in the photosynthetic chain and possibly in a chloroplast respiratory chain. The immediate electron acceptor for the enzyme in this species is believed to be plastoquinone. Couples the redox reaction to proton translocation, and thus conserves the redox energy in a proton gradient. The chain is NAD(P)H-quinone oxidoreductase subunit 1, chloroplastic from Morus indica (Mulberry).